The sequence spans 465 residues: Argininosuccinate lyase (465 aa).

The protein belongs to the lyase 1 family. Argininosuccinate lyase subfamily.

The protein localises to the cytoplasm. It carries out the reaction 2-(N(omega)-L-arginino)succinate = fumarate + L-arginine. The protein operates within amino-acid biosynthesis; L-arginine biosynthesis; L-arginine from L-ornithine and carbamoyl phosphate: step 3/3. In Halorhodospira halophila (strain DSM 244 / SL1) (Ectothiorhodospira halophila (strain DSM 244 / SL1)), this protein is Argininosuccinate lyase.